Here is a 109-residue protein sequence, read N- to C-terminus: DNA-binding protein Mpal_0536 (109 aa).

Residues 14-35 form a disordered region; that stretch reads MAQLQSQQMDQQQMDEEKQRAK. Residues 16–25 are compositionally biased toward low complexity; that stretch reads QLQSQQMDQQ.

Belongs to the PDCD5 family.

The polypeptide is DNA-binding protein Mpal_0536 (Methanosphaerula palustris (strain ATCC BAA-1556 / DSM 19958 / E1-9c)).